Consider the following 318-residue polypeptide: Cephalosporin-C deacetylase (318 aa).

Tyr91 is a substrate binding site. Catalysis depends on Ser181, which acts as the Nucleophile. Catalysis depends on charge relay system residues Asp269 and His298.

The protein belongs to the carbohydrate esterase 7 family. As to quaternary structure, homohexamer.

The protein localises to the cytoplasm. The catalysed reaction is Deacetylation of xylans and xylo-oligosaccharides.. It catalyses the reaction cephalosporin C + H2O = deacetylcephalosporin C + acetate + H(+). In terms of biological role, esterase that removed acetyl groups from a number of O-acetylated small substrates, such as acetylated xylose, short xylooligosaccharides and cephalosporin C. Has no activity towards polymeric acetylated xylan. Cannot cleave amide linkages. This is Cephalosporin-C deacetylase (cah) from Bacillus subtilis (strain 168).